We begin with the raw amino-acid sequence, 219 residues long: Histone H1.4 (219 aa).

A compositionally biased stretch (low complexity) spans 1–15 (MSETAPAAPAAPAPA). The segment at 1 to 41 (MSETAPAAPAAPAPAEKTPVKKKARKSAGAAKRKASGPPVS) is disordered. Position 2 is an N-acetylserine (S2). A Phosphoserine modification is found at S2. An N6-acetyllysine modification is found at K17. T18 bears the Phosphothreonine mark. Residues 20–35 (VKKKARKSAGAAKRKA) show a composition bias toward basic residues. The residue at position 26 (K26) is an N6-acetyllysine; alternate. K26 carries the post-translational modification N6-methyllysine; alternate. K34 carries the post-translational modification N6-(beta-hydroxybutyryl)lysine; alternate. K34 bears the N6-succinyllysine; alternate mark. S36 bears the Phosphoserine mark. Residues 36 to 109 (SGPPVSELIT…GASGSFKLNK (74 aa)) enclose the H15 domain. Residue K52 is modified to N6-(beta-hydroxybutyryl)lysine. At R54 the chain carries Citrulline. N6-(beta-hydroxybutyryl)lysine is present on residues K64, K85, K90, and K106. The tract at residues 92-219 (TLVQTKGTGA…KPKKAAAKKK (128 aa)) is disordered. Positions 119 to 140 (KAKKAGAAKAKKPAGAAKKPKK) are enriched in basic residues. Residue T146 is modified to Phosphothreonine. Composition is skewed to basic residues over residues 149-160 (KSAKKTPKKAKK) and 168-185 (KKAKSPKKAKAAKPKKAP). S150 carries the post-translational modification ADP-ribosylserine. A Phosphoserine modification is found at S187. Residues 192–219 (KAVKPKAAKPKTAKPKAAKPKKAAAKKK) are compositionally biased toward basic residues.

It belongs to the histone H1/H5 family. Post-translationally, H1 histones are progressively phosphorylated during the cell cycle, becoming maximally phosphorylated during late G2 phase and M phase, and being dephosphorylated sharply thereafter. Acetylated at Lys-26. Deacetylated at Lys-26 by SIRT1. In terms of processing, citrullination at Arg-54 (H1R54ci) by PADI4 takes place within the DNA-binding site of H1 and results in its displacement from chromatin and global chromatin decondensation, thereby promoting pluripotency and stem cell maintenance. Post-translationally, ADP-ribosylated on Ser-150 in response to DNA damage.

It localises to the nucleus. It is found in the chromosome. In terms of biological role, histone H1 protein binds to linker DNA between nucleosomes forming the macromolecular structure known as the chromatin fiber. Histones H1 are necessary for the condensation of nucleosome chains into higher-order structured fibers. Also acts as a regulator of individual gene transcription through chromatin remodeling, nucleosome spacing and DNA methylation. The sequence is that of Histone H1.4 from Homo sapiens (Human).